Consider the following 189-residue polypeptide: Peptidyl-tRNA hydrolase (189 aa).

Tyr-15 is a binding site for tRNA. The Proton acceptor role is filled by His-20. Phe-66, Asn-68, and Asn-114 together coordinate tRNA.

The protein belongs to the PTH family. In terms of assembly, monomer.

It is found in the cytoplasm. The catalysed reaction is an N-acyl-L-alpha-aminoacyl-tRNA + H2O = an N-acyl-L-amino acid + a tRNA + H(+). In terms of biological role, hydrolyzes ribosome-free peptidyl-tRNAs (with 1 or more amino acids incorporated), which drop off the ribosome during protein synthesis, or as a result of ribosome stalling. Its function is as follows. Catalyzes the release of premature peptidyl moieties from peptidyl-tRNA molecules trapped in stalled 50S ribosomal subunits, and thus maintains levels of free tRNAs and 50S ribosomes. The protein is Peptidyl-tRNA hydrolase of Dichelobacter nodosus (strain VCS1703A).